The sequence spans 909 residues: Protein translocase subunit SecA (909 aa).

ATP contacts are provided by residues Gln87, 105–109 (GEGKT), and Asp507. The tract at residues 857 to 909 (DTHSELAEEQPPVAENRENKQQPFVRKNEKVGRNDPCPCGSGKKYKQCHGKLN) is disordered. Over residues 871 to 889 (ENRENKQQPFVRKNEKVGR) the composition is skewed to basic and acidic residues. Cys893, Cys895, Cys904, and His905 together coordinate Zn(2+). The span at 899 to 909 (KKYKQCHGKLN) shows a compositional bias: basic residues.

The protein belongs to the SecA family. In terms of assembly, monomer and homodimer. Part of the essential Sec protein translocation apparatus which comprises SecA, SecYEG and auxiliary proteins SecDF-YajC and YidC. It depends on Zn(2+) as a cofactor.

The protein localises to the cell inner membrane. The protein resides in the cytoplasm. The catalysed reaction is ATP + H2O + cellular proteinSide 1 = ADP + phosphate + cellular proteinSide 2.. In terms of biological role, part of the Sec protein translocase complex. Interacts with the SecYEG preprotein conducting channel. Has a central role in coupling the hydrolysis of ATP to the transfer of proteins into and across the cell membrane, serving both as a receptor for the preprotein-SecB complex and as an ATP-driven molecular motor driving the stepwise translocation of polypeptide chains across the membrane. This chain is Protein translocase subunit SecA, found in Nitrosomonas europaea (strain ATCC 19718 / CIP 103999 / KCTC 2705 / NBRC 14298).